Consider the following 206-residue polypeptide: Holliday junction branch migration complex subunit RuvA (206 aa).

The interval 1-64 (MIGRLHGIII…EDAQLLYGFN (64 aa)) is domain I. The domain II stretch occupies residues 65-143 (TRQERTLFRE…GWISHDLFTP (79 aa)). The tract at residues 144–157 (YTDAAPVDHEPSLA) is flexible linker. The interval 158-206 (PADTVESEAVAALLALGYKPQQASLVVSKVIKPEMTVENVIREALRSML) is domain III.

Belongs to the RuvA family. Homotetramer. Forms an RuvA(8)-RuvB(12)-Holliday junction (HJ) complex. HJ DNA is sandwiched between 2 RuvA tetramers; dsDNA enters through RuvA and exits via RuvB. An RuvB hexamer assembles on each DNA strand where it exits the tetramer. Each RuvB hexamer is contacted by two RuvA subunits (via domain III) on 2 adjacent RuvB subunits; this complex drives branch migration. In the full resolvosome a probable DNA-RuvA(4)-RuvB(12)-RuvC(2) complex forms which resolves the HJ.

Its subcellular location is the cytoplasm. Functionally, the RuvA-RuvB-RuvC complex processes Holliday junction (HJ) DNA during genetic recombination and DNA repair, while the RuvA-RuvB complex plays an important role in the rescue of blocked DNA replication forks via replication fork reversal (RFR). RuvA specifically binds to HJ cruciform DNA, conferring on it an open structure. The RuvB hexamer acts as an ATP-dependent pump, pulling dsDNA into and through the RuvAB complex. HJ branch migration allows RuvC to scan DNA until it finds its consensus sequence, where it cleaves and resolves the cruciform DNA. This is Holliday junction branch migration complex subunit RuvA from Tolumonas auensis (strain DSM 9187 / NBRC 110442 / TA 4).